The sequence spans 405 residues: Growth/differentiation factor 11 (405 aa).

The first 24 residues, 1-24 (MVLAAPLLLGFLLLALELRPRGEA), serve as a signal peptide directing secretion. Residues 25-296 (AEGPAAAAAA…VLENTKRSRR (272 aa)) constitute a propeptide that is removed on maturation. Residue N92 is glycosylated (N-linked (GlcNAc...) asparagine). Disulfide bonds link C302/C312, C311/C370, C339/C402, and C343/C404.

The protein belongs to the TGF-beta family. As to quaternary structure, homodimer; disulfide-linked. Interacts directly with ACVR2B. Interacts directly with ACVR2A. Interacts with ACVR1B, TGFBR1 and ACVR1C in an ACVR2B-dependent manner. Interacts with FST isoform 2/FS288. Post-translationally, synthesized as large precursor molecule that undergoes proteolytic cleavage by furin-like proteases. This produces an inactive form consisting of the mature C-terminal portion non-covalently bound to its cleaved N-terminal propeptide. Activation of the mature form requires additional cleavage of the propeptide by a tolloid-like metalloproteinase.

The protein resides in the secreted. Secreted signal that acts globally to regulate anterior/posterior axial patterning during development. May play critical roles in patterning both mesodermal and neural tissues. It is required for proper vertebral patterning and orofacial development. Signals through activin receptors type-2, ACVR2A and ACVR2B, and activin receptors type-1, ACVR1B, ACVR1C and TGFBR1 leading to the phosphorylation of SMAD2 and SMAD3. The sequence is that of Growth/differentiation factor 11 (Gdf11) from Rattus norvegicus (Rat).